We begin with the raw amino-acid sequence, 394 residues long: Cysteine protease ATG4B (394 aa).

The active-site Nucleophile is Cys74. Catalysis depends on residues Asp280 and His282. The LIR motif lies at 389-392; it reads FEIL.

Belongs to the peptidase C54 family.

It localises to the cytoplasm. Its subcellular location is the cytosol. The protein resides in the cytoplasmic vesicle. The protein localises to the autophagosome. It is found in the endoplasmic reticulum. It localises to the mitochondrion. It carries out the reaction [protein]-C-terminal L-amino acid-glycyl-phosphatidylethanolamide + H2O = [protein]-C-terminal L-amino acid-glycine + a 1,2-diacyl-sn-glycero-3-phosphoethanolamine. The catalysed reaction is [protein]-C-terminal L-amino acid-glycyl-phosphatidylserine + H2O = [protein]-C-terminal L-amino acid-glycine + a 1,2-diacyl-sn-glycero-3-phospho-L-serine. Cysteine protease that plays a key role in autophagy by mediating both proteolytic activation and delipidation of ATG8 family proteins. Required for canonical autophagy (macroautophagy), non-canonical autophagy as well as for mitophagy. The protease activity is required for proteolytic activation of ATG8 family proteins: cleaves the C-terminal amino acid of ATG8 proteins to reveal a C-terminal glycine. Exposure of the glycine at the C-terminus is essential for ATG8 proteins conjugation to phosphatidylethanolamine (PE) and insertion to membranes, which is necessary for autophagy. Protease activity is also required to counteract formation of high-molecular weight conjugates of ATG8 proteins (ATG8ylation): acts as a deubiquitinating-like enzyme that removes ATG8 conjugated to other proteins, such as ATG3. In addition to the protease activity, also mediates delipidation of ATG8 family proteins. Catalyzes delipidation of PE-conjugated forms of ATG8 proteins during macroautophagy. Also involved in non-canonical autophagy, a parallel pathway involving conjugation of ATG8 proteins to single membranes at endolysosomal compartments, by catalyzing delipidation of ATG8 proteins conjugated to phosphatidylserine (PS). The polypeptide is Cysteine protease ATG4B (Danio rerio (Zebrafish)).